The primary structure comprises 598 residues: DNA mismatch repair protein MutL (598 aa).

The protein belongs to the DNA mismatch repair MutL/HexB family.

Functionally, this protein is involved in the repair of mismatches in DNA. It is required for dam-dependent methyl-directed DNA mismatch repair. May act as a 'molecular matchmaker', a protein that promotes the formation of a stable complex between two or more DNA-binding proteins in an ATP-dependent manner without itself being part of a final effector complex. This chain is DNA mismatch repair protein MutL, found in Thiobacillus denitrificans (strain ATCC 25259 / T1).